Here is a 351-residue protein sequence, read N- to C-terminus: Phosphoribosylformylglycinamidine cyclo-ligase (351 aa).

Belongs to the AIR synthase family.

The protein localises to the cytoplasm. It catalyses the reaction 2-formamido-N(1)-(5-O-phospho-beta-D-ribosyl)acetamidine + ATP = 5-amino-1-(5-phospho-beta-D-ribosyl)imidazole + ADP + phosphate + H(+). It functions in the pathway purine metabolism; IMP biosynthesis via de novo pathway; 5-amino-1-(5-phospho-D-ribosyl)imidazole from N(2)-formyl-N(1)-(5-phospho-D-ribosyl)glycinamide: step 2/2. This chain is Phosphoribosylformylglycinamidine cyclo-ligase, found in Burkholderia ambifaria (strain MC40-6).